Reading from the N-terminus, the 124-residue chain is Small ribosomal subunit protein uS13 (124 aa).

Positions 94 to 124 are disordered; that stretch reads GLPLRGQRTKNNSRTRKGKRKTVANKKKATK. Residues 100–124 show a composition bias toward basic residues; the sequence is QRTKNNSRTRKGKRKTVANKKKATK.

This sequence belongs to the universal ribosomal protein uS13 family. In terms of assembly, part of the 30S ribosomal subunit. Forms a loose heterodimer with protein S19. Forms two bridges to the 50S subunit in the 70S ribosome.

In terms of biological role, located at the top of the head of the 30S subunit, it contacts several helices of the 16S rRNA. In the 70S ribosome it contacts the 23S rRNA (bridge B1a) and protein L5 of the 50S subunit (bridge B1b), connecting the 2 subunits; these bridges are implicated in subunit movement. Contacts the tRNAs in the A and P-sites. In Flavobacterium johnsoniae (strain ATCC 17061 / DSM 2064 / JCM 8514 / BCRC 14874 / CCUG 350202 / NBRC 14942 / NCIMB 11054 / UW101) (Cytophaga johnsonae), this protein is Small ribosomal subunit protein uS13.